Reading from the N-terminus, the 1047-residue chain is Protein masquerade (1047 aa).

An N-terminal signal peptide occupies residues 1–30 (MPRHSSTMSRLVLPLIFSILLVSKPSPSQA). The interval 54-87 (KDCPGVCVHTLATLICYEVLDDVACPSPSMKCCI) is CLIP 1. 3 disulfide bridges follow: Cys56/Cys85, Cys60/Cys78, and Cys69/Cys86. The N-linked (GlcNAc...) asparagine glycan is linked to Asn95. 2 stretches are compositionally biased toward low complexity: residues 98–139 (AVRA…STTP) and 148–175 (KRPA…VATA). Residues 98–189 (AVRATTTPKT…KEEATKADDA (92 aa)) are disordered. The span at 176–189 (KPKDKEEATKADDA) shows a compositional bias: basic and acidic residues. The tract at residues 192–224 (DCTGVCVADRIAEYCEAYLTSDGLCKEGTKCCV) is CLIP 2. Cystine bridges form between Cys193–Cys222, Cys197–Cys216, and Cys206–Cys223. Asn251 carries N-linked (GlcNAc...) asparagine glycosylation. The tract at residues 252-335 (QTLSEKSAPA…PLSNKLKSGQ (84 aa)) is disordered. Low complexity predominate over residues 263–280 (SSSTSTTSTTTTTSTTTT). The N-linked (GlcNAc...) asparagine glycan is linked to Asn287. Positions 307-325 (AAEEEEEQETEEDGEEEEP) are enriched in acidic residues. Residues 343–374 (ECEGECMNGIFAIFCDDIDSDAFCPGEESCCV) form a CLIP 3 region. 3 disulfides stabilise this stretch: Cys344/Cys372, Cys348/Cys366, and Cys357/Cys373. A disordered region spans residues 376–428 (GGASEATPSSKAPPTKPAIKHAPKPAAKPARPASPPPAPPSSTSGGGGGGDFL). The tract at residues 457–492 (RCPGFCLLNIMAAFCERPSVLVSTPTTCAKGSVCCD) is CLIP 4. 3 disulfides stabilise this stretch: Cys458–Cys490, Cys462–Cys484, and Cys471–Cys491. Positions 498 to 527 (APKPKLPPPTPSPTASPTAPPYVLPNTPSP) are disordered. Residues 501–527 (PKLPPPTPSPTASPTAPPYVLPNTPSP) are compositionally biased toward pro residues. Residues 532 to 567 (ECPGSCIVSLLSFTCFKNAEMTDLFRCKRSGQICCA) form a CLIP 5 region. Cystine bridges form between Cys533–Cys565, Cys537–Cys558, and Cys546–Cys566. Residue Asn582 is glycosylated (N-linked (GlcNAc...) asparagine). The tract at residues 583-673 (DTAYYPAPPP…TTTTTTTTPR (91 aa)) is disordered. 3 stretches are compositionally biased toward pro residues: residues 588 to 606 (PAPP…PQTP), 613 to 638 (NPPP…PPAP), and 650 to 661 (GLPPQPQPPMTT). Over residues 662–672 (PPTTTTTTTTP) the composition is skewed to low complexity. 5 cysteine pairs are disulfide-bonded: Cys682/Cys916, Cys829/Cys845, Cys930/Cys1001, Cys961/Cys981, and Cys991/Cys1019. Residues Asn726 and Asn794 are each glycosylated (N-linked (GlcNAc...) asparagine). The tract at residues 803 to 1043 (VVGGEDGENG…FIGWINQIIS (241 aa)) is peptidase S1.

This sequence belongs to the peptidase S1 family. CLIP subfamily. In terms of processing, proteolytically cleaved and thereafter secreted.

It is found in the secreted. It localises to the cell projection. The protein localises to the axon. In embryogenesis, has a role in somatic muscle attachment and in the development of axonal pathways probably by stabilizing cell-matrix adhesion and/or by acting as a competitive antagonist of serine proteases. The protein is Protein masquerade of Drosophila melanogaster (Fruit fly).